A 274-amino-acid polypeptide reads, in one-letter code: Malonyl-[acyl-carrier protein] O-methyltransferase (274 aa).

It belongs to the methyltransferase superfamily.

The catalysed reaction is malonyl-[ACP] + S-adenosyl-L-methionine = malonyl-[ACP] methyl ester + S-adenosyl-L-homocysteine. The protein operates within cofactor biosynthesis; biotin biosynthesis. In terms of biological role, converts the free carboxyl group of a malonyl-thioester to its methyl ester by transfer of a methyl group from S-adenosyl-L-methionine (SAM). It allows to synthesize pimeloyl-ACP via the fatty acid synthetic pathway. In Bacteroides helcogenes (strain ATCC 35417 / DSM 20613 / JCM 6297 / CCUG 15421 / P 36-108), this protein is Malonyl-[acyl-carrier protein] O-methyltransferase.